Reading from the N-terminus, the 224-residue chain is Protein GrpE (224 aa).

The segment at 27–77 is disordered; that stretch reads NQASEDIDQENQSEVVDDTTENEDASEEVYEEDTASEDGSKEKKSFFKKKE. A compositionally biased stretch (acidic residues) spans 31 to 62; the sequence is EDIDQENQSEVVDDTTENEDASEEVYEEDTAS.

Belongs to the GrpE family. As to quaternary structure, homodimer.

The protein resides in the cytoplasm. Its function is as follows. Participates actively in the response to hyperosmotic and heat shock by preventing the aggregation of stress-denatured proteins, in association with DnaK and GrpE. It is the nucleotide exchange factor for DnaK and may function as a thermosensor. Unfolded proteins bind initially to DnaJ; upon interaction with the DnaJ-bound protein, DnaK hydrolyzes its bound ATP, resulting in the formation of a stable complex. GrpE releases ADP from DnaK; ATP binding to DnaK triggers the release of the substrate protein, thus completing the reaction cycle. Several rounds of ATP-dependent interactions between DnaJ, DnaK and GrpE are required for fully efficient folding. This Lachnoclostridium phytofermentans (strain ATCC 700394 / DSM 18823 / ISDg) (Clostridium phytofermentans) protein is Protein GrpE.